Here is a 338-residue protein sequence, read N- to C-terminus: Anthranilate phosphoribosyltransferase (338 aa).

Residues Gly80, 83 to 84 (GD), Thr88, 90 to 93 (NIST), 108 to 116 (KHGNRAMSS), and Ser120 each bind 5-phospho-alpha-D-ribose 1-diphosphate. Gly80 contributes to the anthranilate binding site. Residue Ser92 participates in Mg(2+) binding. Asn111 provides a ligand contact to anthranilate. Arg166 is a binding site for anthranilate. Mg(2+) contacts are provided by Asp225 and Glu226.

It belongs to the anthranilate phosphoribosyltransferase family. As to quaternary structure, homodimer. Mg(2+) serves as cofactor.

The catalysed reaction is N-(5-phospho-beta-D-ribosyl)anthranilate + diphosphate = 5-phospho-alpha-D-ribose 1-diphosphate + anthranilate. It functions in the pathway amino-acid biosynthesis; L-tryptophan biosynthesis; L-tryptophan from chorismate: step 2/5. Catalyzes the transfer of the phosphoribosyl group of 5-phosphorylribose-1-pyrophosphate (PRPP) to anthranilate to yield N-(5'-phosphoribosyl)-anthranilate (PRA). This is Anthranilate phosphoribosyltransferase from Herpetosiphon aurantiacus (strain ATCC 23779 / DSM 785 / 114-95).